The primary structure comprises 119 residues: Large ribosomal subunit protein bL20c (119 aa).

This sequence belongs to the bacterial ribosomal protein bL20 family.

The protein resides in the plastid. The protein localises to the chloroplast. In terms of biological role, binds directly to 23S ribosomal RNA and is necessary for the in vitro assembly process of the 50S ribosomal subunit. It is not involved in the protein synthesizing functions of that subunit. The polypeptide is Large ribosomal subunit protein bL20c (Amborella trichopoda).